The sequence spans 121 residues: MAGHRMARMAEEIKRELARLLRDEMKDPRLGFVSITAVEVSGDGRHAKVYVSVMGDESARDNSQAALKQATGFLRTELSKSLRVRYVPELVFLSDLSIERGTRIARLLTEMENHDDAEAPR.

Belongs to the RbfA family. Monomer. Binds 30S ribosomal subunits, but not 50S ribosomal subunits or 70S ribosomes.

It is found in the cytoplasm. Functionally, one of several proteins that assist in the late maturation steps of the functional core of the 30S ribosomal subunit. Associates with free 30S ribosomal subunits (but not with 30S subunits that are part of 70S ribosomes or polysomes). Required for efficient processing of 16S rRNA. May interact with the 5'-terminal helix region of 16S rRNA. The chain is Ribosome-binding factor A from Heliobacterium modesticaldum (strain ATCC 51547 / Ice1).